Reading from the N-terminus, the 33-residue chain is MSDIN-like toxin proprotein 6 (33 aa).

Positions 1-10 (MSDINATRLP) are excised as a propeptide. The segment at residues 11 to 20 (LILLAALGIP) is a cross-link (cyclopeptide (Leu-Pro)). Residues 21-33 (SDDADSTLTRGER) constitute a propeptide that is removed on maturation.

Belongs to the MSDIN fungal toxin family. Post-translationally, processed by the macrocyclase-peptidase enzyme POPB to yield a toxic cyclic decapeptide. POPB first removes 10 residues from the N-terminus. Conformational trapping of the remaining peptide forces the enzyme to release this intermediate rather than proceed to macrocyclization. The enzyme rebinds the remaining peptide in a different conformation and catalyzes macrocyclization of the N-terminal 10 residues.

Probable toxin that belongs to the MSDIN-like toxin family responsible for a large number of food poisoning cases and deaths. This is MSDIN-like toxin proprotein 6 from Amanita phalloides (Death cap).